We begin with the raw amino-acid sequence, 461 residues long: D-phenylhydantoinase (461 aa).

A divalent metal cation is bound by residues His-59, His-61, and Lys-151. Residue Lys-151 is modified to N6-carboxylysine. Tyr-156 provides a ligand contact to substrate. A divalent metal cation-binding residues include His-182 and His-239. Residue Ser-286 participates in substrate binding. Asp-313 is an a divalent metal cation binding site. Asn-335 is a substrate binding site.

Belongs to the metallo-dependent hydrolases superfamily. Hydantoinase/dihydropyrimidinase family. Homotetramer. Zn(2+) is required as a cofactor. Ni(2+) serves as cofactor. Requires Co(2+) as cofactor. It depends on Mn(2+) as a cofactor. Carboxylation allows a single lysine to coordinate two divalent metal cations.

The catalysed reaction is D-5-phenylhydantoin + H2O = N-carbamoyl-D-phenylglycine + H(+). Functionally, catalyzes the stereospecific hydrolysis of the cyclic amide bond of D-hydantoin derivatives with an aromatic side chains at the 5'-position. Has no activity on dihydropyrimidines. The physiological function is unknown. This chain is D-phenylhydantoinase (hyuA), found in Escherichia coli (strain K12).